Reading from the N-terminus, the 524-residue chain is Probable plastidic glucose transporter 1 (524 aa).

The next 12 membrane-spanning stretches (helical) occupy residues 88–108 (MANFLFGYHIGVMNGPIVSIA), 122–142 (LVVSIFIAGAFIGSIVAGPLV), 151–171 (FQIFTIPLILGALVSAQAHSL), 179–199 (FLVGLGIGVNTVLVPIYISEV), 208–228 (LGTLCQIGTCLGIIFSLLLGI), 239–259 (TMLYVASMPGFLLALGMQFAV), 320–340 (VAFIGGSLFVLQQFAGINGVL), 357–377 (QASLYVGVTNFAGALCASYLI), 386–406 (LIGSYLGMAVSMFLIVYAVGF), 420–440 (GTLMYIFSFAIGAGPVTGLII), 452–472 (IMGFSFSVHWVSNFLVGLFFL), and 483–503 (VYASFGSVSLLAAAFSHLFTV).

This sequence belongs to the major facilitator superfamily. Sugar transporter (TC 2.A.1.1) family.

It is found in the plastid. The protein resides in the chloroplast membrane. In terms of biological role, may be involved in the efflux of glucose towards the cytosol. The protein is Probable plastidic glucose transporter 1 of Arabidopsis thaliana (Mouse-ear cress).